A 249-amino-acid chain; its full sequence is tRNA (guanine-N(1)-)-methyltransferase (249 aa).

S-adenosyl-L-methionine-binding positions include Gly121 and 141–146 (LGDFVL).

It belongs to the RNA methyltransferase TrmD family. In terms of assembly, homodimer.

It localises to the cytoplasm. The catalysed reaction is guanosine(37) in tRNA + S-adenosyl-L-methionine = N(1)-methylguanosine(37) in tRNA + S-adenosyl-L-homocysteine + H(+). Functionally, specifically methylates guanosine-37 in various tRNAs. In Cereibacter sphaeroides (strain ATCC 17023 / DSM 158 / JCM 6121 / CCUG 31486 / LMG 2827 / NBRC 12203 / NCIMB 8253 / ATH 2.4.1.) (Rhodobacter sphaeroides), this protein is tRNA (guanine-N(1)-)-methyltransferase.